A 333-amino-acid polypeptide reads, in one-letter code: NADH-quinone oxidoreductase subunit H (333 aa).

The next 8 helical transmembrane spans lie at 15-35, 88-108, 117-137, 159-179, 191-211, 241-261, 273-293, and 313-333; these read FFIF…FVTY, FILA…VIPF, IGVG…GVLT, ISYE…TGSL, VWYI…AVAE, FFML…TVLF, FIPG…LFIW, and VLLP…ELFF.

The protein belongs to the complex I subunit 1 family. NDH-1 is composed of 14 different subunits. Subunits NuoA, H, J, K, L, M, N constitute the membrane sector of the complex.

The protein resides in the cell membrane. It catalyses the reaction a quinone + NADH + 5 H(+)(in) = a quinol + NAD(+) + 4 H(+)(out). In terms of biological role, NDH-1 shuttles electrons from NADH, via FMN and iron-sulfur (Fe-S) centers, to quinones in the respiratory chain. The immediate electron acceptor for the enzyme in this species is believed to be ubiquinone. Couples the redox reaction to proton translocation (for every two electrons transferred, four hydrogen ions are translocated across the cytoplasmic membrane), and thus conserves the redox energy in a proton gradient. This subunit may bind ubiquinone. In Bacillus cytotoxicus (strain DSM 22905 / CIP 110041 / 391-98 / NVH 391-98), this protein is NADH-quinone oxidoreductase subunit H.